A 543-amino-acid chain; its full sequence is Serine/threonine-protein kinase Chk2 (543 aa).

The interval 1-66 is disordered; the sequence is MSRESDVEAQ…SGTLSSLETV (66 aa). The span at 8-22 shows a compositional bias: polar residues; the sequence is EAQQSHGSSACSQPH. A compositionally biased stretch (low complexity) spans 23 to 62; that stretch reads GSVTQSQGSSSQSQGISSSSTSTMPNSSQSSHSSSGTLSS. Phosphoserine; by PLK3 is present on serine 62. A Phosphothreonine; by ATM and MAP3K20 modification is found at threonine 68. The residue at position 73 (serine 73) is a Phosphoserine; by PLK3. Residues 113–175 enclose the FHA domain; that stretch reads YWFGRDKSCE…NGTFVNTELV (63 aa). The 267-residue stretch at 220 to 486 folds into the Protein kinase domain; the sequence is YIMSKTLGSG…TEEALRHPWL (267 aa). ATP is bound by residues 227 to 234, lysine 249, and 302 to 308; these read GSGACGEV and ELMEGGE. The Proton acceptor role is filled by aspartate 347. ATP-binding positions include 351 to 352 and aspartate 368; that span reads EN. Residues 368-394 form a T-loop/activation segment region; the sequence is DFGHSKILGETSLMRTLCGTPTYLAPE. At serine 379 the chain carries Phosphoserine; by autocatalysis. Phosphothreonine; by autocatalysis is present on residues threonine 383 and threonine 387. Residue serine 456 is modified to Phosphoserine. Polar residues predominate over residues 506–517; the sequence is TALPQVLAQPST. A disordered region spans residues 506-538; it reads TALPQVLAQPSTSRKRPREGEAEGAETTKRPAV. Residues 523–534 show a composition bias toward basic and acidic residues; that stretch reads REGEAEGAETTK.

This sequence belongs to the protein kinase superfamily. CAMK Ser/Thr protein kinase family. CHK2 subfamily. In terms of assembly, homodimer. Homodimerization is part of the activation process but the dimer may dissociate following activation. Interacts with PML. Interacts with TP53. Interacts with RB1; phosphorylates RB1. Interacts with BRCA1. Interacts (phosphorylated at Thr-68) with MDC1; requires ATM-mediated phosphorylation of CHEK2. Interacts with TP53BP1; modulates CHEK2 phosphorylation at Thr-68 in response to ionizing radiation. Interacts with CDC25A; phosphorylates CDC25A and mediates its degradation in response to ionizing radiation. Interacts with CUL1; mediates CHEK2 ubiquitination and regulation. Interacts with CDKN2AIP. Interacts (via protein kinase domain) with CCAR2 (via N-terminus). Interacts with SIRT1. Requires Mg(2+) as cofactor. In terms of processing, phosphorylated. Phosphorylated at Ser-73 by PLK3 in response to DNA damage, promoting phosphorylation at Thr-68 by ATM and the G2/M transition checkpoint. Phosphorylation at Thr-68 induces homodimerization. Autophosphorylates at Thr-383 and Thr-387 in the T-loop/activation segment upon dimerization to become fully active and phosphorylate its substrates like for instance CDC25C. DNA damage-induced autophosphorylation at Ser-379 induces CUL1-mediated ubiquitination and regulates the pro-apoptotic function. Phosphorylation at Ser-456 also regulates ubiquitination. Phosphorylated by PLK4. Post-translationally, ubiquitinated. CUL1-mediated ubiquitination regulates the pro-apoptotic function. Ubiquitination may also regulate protein stability. Ubiquitinated by RNF8 via 'Lys-48'-linked ubiquitination. In terms of tissue distribution, high expression is found in testis, spleen, colon and peripheral blood leukocytes. Low expression is found in other tissues.

It localises to the nucleus. Its subcellular location is the PML body. The protein resides in the nucleoplasm. The enzyme catalyses L-seryl-[protein] + ATP = O-phospho-L-seryl-[protein] + ADP + H(+). It carries out the reaction L-threonyl-[protein] + ATP = O-phospho-L-threonyl-[protein] + ADP + H(+). Activated through phosphorylation at Thr-68 by ATM in response to DNA double-strand breaks. Activation is modulated by several mediators including MDC1 and TP53BP1. Induces homodimerization with exchange of the T-loop/activation segment between protomers and transphosphorylation of the protomers. The autophosphorylated kinase dimer is fully active. Negatively regulated by PPM1D through dephosphorylation of Thr-68. Its function is as follows. Serine/threonine-protein kinase which is required for checkpoint-mediated cell cycle arrest, activation of DNA repair and apoptosis in response to the presence of DNA double-strand breaks. May also negatively regulate cell cycle progression during unperturbed cell cycles. Following activation, phosphorylates numerous effectors preferentially at the consensus sequence [L-X-R-X-X-S/T]. Regulates cell cycle checkpoint arrest through phosphorylation of CDC25A, CDC25B and CDC25C, inhibiting their activity. Inhibition of CDC25 phosphatase activity leads to increased inhibitory tyrosine phosphorylation of CDK-cyclin complexes and blocks cell cycle progression. May also phosphorylate NEK6 which is involved in G2/M cell cycle arrest. Regulates DNA repair through phosphorylation of BRCA2, enhancing the association of RAD51 with chromatin which promotes DNA repair by homologous recombination. Also stimulates the transcription of genes involved in DNA repair (including BRCA2) through the phosphorylation and activation of the transcription factor FOXM1. Regulates apoptosis through the phosphorylation of p53/TP53, MDM4 and PML. Phosphorylation of p53/TP53 at 'Ser-20' by CHEK2 may alleviate inhibition by MDM2, leading to accumulation of active p53/TP53. Phosphorylation of MDM4 may also reduce degradation of p53/TP53. Also controls the transcription of pro-apoptotic genes through phosphorylation of the transcription factor E2F1. Tumor suppressor, it may also have a DNA damage-independent function in mitotic spindle assembly by phosphorylating BRCA1. Its absence may be a cause of the chromosomal instability observed in some cancer cells. Promotes the CCAR2-SIRT1 association and is required for CCAR2-mediated SIRT1 inhibition. Under oxidative stress, promotes ATG7 ubiquitination by phosphorylating the E3 ubiquitin ligase TRIM32 at 'Ser-55' leading to positive regulation of the autophagosme assembly. (Microbial infection) Phosphorylates herpes simplex virus 1/HHV-1 protein ICP0 and thus activates its SUMO-targeted ubiquitin ligase activity. In Homo sapiens (Human), this protein is Serine/threonine-protein kinase Chk2.